Reading from the N-terminus, the 392-residue chain is Probable tRNA sulfurtransferase (392 aa).

A THUMP domain is found at 60–162; it reads QQVINDLQQV…HDCAIVYGHK (103 aa). ATP contacts are provided by residues 180–181, 205–206, Arg-264, Gly-286, and Gln-295; these read LL and TF.

It belongs to the ThiI family.

The protein localises to the cytoplasm. It carries out the reaction [ThiI sulfur-carrier protein]-S-sulfanyl-L-cysteine + a uridine in tRNA + 2 reduced [2Fe-2S]-[ferredoxin] + ATP + H(+) = [ThiI sulfur-carrier protein]-L-cysteine + a 4-thiouridine in tRNA + 2 oxidized [2Fe-2S]-[ferredoxin] + AMP + diphosphate. The catalysed reaction is [ThiS sulfur-carrier protein]-C-terminal Gly-Gly-AMP + S-sulfanyl-L-cysteinyl-[cysteine desulfurase] + AH2 = [ThiS sulfur-carrier protein]-C-terminal-Gly-aminoethanethioate + L-cysteinyl-[cysteine desulfurase] + A + AMP + 2 H(+). Its pathway is cofactor biosynthesis; thiamine diphosphate biosynthesis. In terms of biological role, catalyzes the ATP-dependent transfer of a sulfur to tRNA to produce 4-thiouridine in position 8 of tRNAs, which functions as a near-UV photosensor. Also catalyzes the transfer of sulfur to the sulfur carrier protein ThiS, forming ThiS-thiocarboxylate. This is a step in the synthesis of thiazole, in the thiamine biosynthesis pathway. The sulfur is donated as persulfide by IscS. The sequence is that of Probable tRNA sulfurtransferase from Ureaplasma urealyticum serovar 10 (strain ATCC 33699 / Western).